Consider the following 588-residue polypeptide: Protein POF1B (588 aa).

2 coiled-coil regions span residues 332-442 (STFS…VSET) and 502-530 (LHEL…RQEI).

As to quaternary structure, interacts with nonmuscle actin.

It localises to the cell junction. Its subcellular location is the tight junction. Functionally, plays a key role in the organization of epithelial monolayers by regulating the actin cytoskeleton. May be involved in ovary development. The protein is Protein POF1B (POF1B) of Pongo abelii (Sumatran orangutan).